Reading from the N-terminus, the 282-residue chain is Deoxyribonuclease-1 (282 aa).

The signal sequence occupies residues 1–22; that stretch reads MRGARLTGALLALAGLLQVALS. An N-linked (GlcNAc...) asparagine glycan is attached at Asn40. Glu100 is a catalytic residue. An intrachain disulfide couples Cys123 to Cys126. N-linked (GlcNAc...) asparagine glycosylation occurs at Asn128. His156 is a catalytic residue. Cys195 and Cys231 are joined by a disulfide.

It belongs to the DNase I family. Ca(2+) serves as cofactor. Mg(2+) is required as a cofactor.

Its subcellular location is the secreted. It localises to the zymogen granule. The protein localises to the nucleus envelope. The enzyme catalyses Endonucleolytic cleavage to 5'-phosphodinucleotide and 5'-phosphooligonucleotide end-products.. In terms of biological role, serum endocuclease secreted into body fluids by a wide variety of exocrine and endocrine organs. Expressed by non-hematopoietic tissues and preferentially cleaves protein-free DNA. Among other functions, seems to be involved in cell death by apoptosis. Binds specifically to G-actin and blocks actin polymerization. Together with DNASE1L3, plays a key role in degrading neutrophil extracellular traps (NETs). NETs are mainly composed of DNA fibers and are released by neutrophils to bind pathogens during inflammation. Degradation of intravascular NETs by DNASE1 and DNASE1L3 is required to prevent formation of clots that obstruct blood vessels and cause organ damage following inflammation. In Equus caballus (Horse), this protein is Deoxyribonuclease-1 (DNASE1).